We begin with the raw amino-acid sequence, 362 residues long: Chromobox protein homolog 8 (362 aa).

Residues 11–69 (FAAEALLKRRIRKGRMEYLVKWKGWSQKYSTWEPEENILDARLLAAFEEREREMELYGP) enclose the Chromo domain. Basic and acidic residues predominate over residues 90 to 100 (KTYEFRSDSTR). The segment at 90–197 (KTYEFRSDST…LGEPSAGLGE (108 aa)) is disordered. At serine 110 the chain carries Phosphoserine. A compositionally biased stretch (basic and acidic residues) spans 142–162 (DPPRDRDRERDRGTSRVDDKP). Phosphoserine occurs at positions 164 and 229. Tyrosine 234 carries the post-translational modification Phosphotyrosine. Residues serine 238, serine 284, serine 305, and serine 325 each carry the phosphoserine modification.

In terms of assembly, component of a PRC1-like complex. Interacts with RING1, RNF2, PCGF1, PCGF2, PCGF3, BMI1, PCGF5, PCGF6 and PHC2. Interacts with histone H3. Interacts with MLLT3. Interacts with PHC2. Interacts (via chromodomain) with single-stranded RNA.

It is found in the nucleus. The protein localises to the chromosome. Functionally, component of a Polycomb group (PcG) multiprotein PRC1-like complex, a complex class required to maintain the transcriptionally repressive state of many genes, including Hox genes, throughout development. PcG PRC1 complex acts via chromatin remodeling and modification of histones; it mediates monoubiquitination of histone H2A 'Lys-119', rendering chromatin heritably changed in its expressibility. The chain is Chromobox protein homolog 8 (Cbx8) from Mus musculus (Mouse).